A 500-amino-acid polypeptide reads, in one-letter code: NAD(P)H-quinone oxidoreductase chain 4, chloroplastic (500 aa).

14 helical membrane-spanning segments follow: residues 4–24, 35–55, 87–107, 111–131, 134–154, 167–187, 211–231, 242–262, 274–294, 313–333, 334–354, 386–406, 417–437, and 462–482; these read FPWLTILVVLPIFAGSLIFFL, YTIAICLLEFLIMTYAFCYHF, LGSILLTGFITTLATLAAWPV, SQLFYFLMLAMYSGQIGLFSS, LLLFFIMWELELIPVYLLLSM, FILYTAGGSIFFLIGVLGMGL, ILLYFGFLIAYAVKLPIIPLH, HYSTCMLLAGILLKMGAYGLI, YLFSPWLVIIGAVQIIYAALT, MGFIIIGIGSITNIGLNGAIL, QILSHGFIGATLFFLAGTACD, LALPGMSGFVAELVVFFGLIT, LITFVMAIGMILTPIYLLSML, and LFLLICIFLPVIGIGIYPDFV.

Belongs to the complex I subunit 4 family.

It is found in the plastid. The protein localises to the chloroplast thylakoid membrane. It catalyses the reaction a plastoquinone + NADH + (n+1) H(+)(in) = a plastoquinol + NAD(+) + n H(+)(out). It carries out the reaction a plastoquinone + NADPH + (n+1) H(+)(in) = a plastoquinol + NADP(+) + n H(+)(out). The chain is NAD(P)H-quinone oxidoreductase chain 4, chloroplastic from Saccharum hybrid (Sugarcane).